The following is a 607-amino-acid chain: UvrABC system protein C (607 aa).

In terms of domain architecture, GIY-YIG spans 16–94 (HLPGVYRHLD…IKSLRPRYNI (79 aa)). The 36-residue stretch at 203–238 (REVMDEIEARMQQASGELRFEEAAVLRDQMGSLSKV) folds into the UVR domain.

The protein belongs to the UvrC family. Interacts with UvrB in an incision complex.

The protein localises to the cytoplasm. The UvrABC repair system catalyzes the recognition and processing of DNA lesions. UvrC both incises the 5' and 3' sides of the lesion. The N-terminal half is responsible for the 3' incision and the C-terminal half is responsible for the 5' incision. The protein is UvrABC system protein C of Bordetella avium (strain 197N).